The primary structure comprises 339 residues: UDP-N-acetylenolpyruvoylglucosamine reductase (339 aa).

The FAD-binding PCMH-type domain occupies 18–189; the sequence is GIDVKARYFS…LRVRFALTRT (172 aa). The active site involves R166. The active-site Proton donor is S239. The active site involves E335.

It belongs to the MurB family. FAD is required as a cofactor.

The protein resides in the cytoplasm. It carries out the reaction UDP-N-acetyl-alpha-D-muramate + NADP(+) = UDP-N-acetyl-3-O-(1-carboxyvinyl)-alpha-D-glucosamine + NADPH + H(+). Its pathway is cell wall biogenesis; peptidoglycan biosynthesis. Its function is as follows. Cell wall formation. This chain is UDP-N-acetylenolpyruvoylglucosamine reductase, found in Pseudomonas putida (strain ATCC 47054 / DSM 6125 / CFBP 8728 / NCIMB 11950 / KT2440).